A 217-amino-acid chain; its full sequence is Ribulose-phosphate 3-epimerase (217 aa).

A substrate-binding site is contributed by serine 6. Histidine 29, aspartate 31, and histidine 62 together coordinate a divalent metal cation. Residue aspartate 31 is the Proton acceptor of the active site. Substrate is bound by residues histidine 62, 138-141 (GFGG), 171-173 (DGG), and 193-194 (GS). Aspartate 171 contributes to the a divalent metal cation binding site. Aspartate 171 (proton donor) is an active-site residue.

The protein belongs to the ribulose-phosphate 3-epimerase family. It depends on a divalent metal cation as a cofactor.

It carries out the reaction D-ribulose 5-phosphate = D-xylulose 5-phosphate. It functions in the pathway carbohydrate degradation. Catalyzes the reversible epimerization of D-ribulose 5-phosphate to D-xylulose 5-phosphate. The polypeptide is Ribulose-phosphate 3-epimerase (Helicobacter pylori (strain ATCC 700392 / 26695) (Campylobacter pylori)).